Consider the following 186-residue polypeptide: Peptidyl-tRNA hydrolase (186 aa).

A tRNA-binding site is contributed by Tyr-14. Residue His-19 is the Proton acceptor of the active site. The tRNA site is built by Tyr-64, Asn-66, and Asn-112.

It belongs to the PTH family. Monomer.

The protein resides in the cytoplasm. The enzyme catalyses an N-acyl-L-alpha-aminoacyl-tRNA + H2O = an N-acyl-L-amino acid + a tRNA + H(+). Its function is as follows. Hydrolyzes ribosome-free peptidyl-tRNAs (with 1 or more amino acids incorporated), which drop off the ribosome during protein synthesis, or as a result of ribosome stalling. In terms of biological role, catalyzes the release of premature peptidyl moieties from peptidyl-tRNA molecules trapped in stalled 50S ribosomal subunits, and thus maintains levels of free tRNAs and 50S ribosomes. This Bacillus cereus (strain ATCC 14579 / DSM 31 / CCUG 7414 / JCM 2152 / NBRC 15305 / NCIMB 9373 / NCTC 2599 / NRRL B-3711) protein is Peptidyl-tRNA hydrolase.